The primary structure comprises 175 residues: ATP synthase subunit b, chloroplastic (175 aa).

Residues 22–42 (VFETNIINLAAVVGIVVSFVG) form a helical membrane-spanning segment.

The protein belongs to the ATPase B chain family. In terms of assembly, F-type ATPases have 2 components, F(1) - the catalytic core - and F(0) - the membrane proton channel. F(1) has five subunits: alpha(3), beta(3), gamma(1), delta(1), epsilon(1). F(0) has four main subunits: a(1), b(1), b'(1) and c(10-14). The alpha and beta chains form an alternating ring which encloses part of the gamma chain. F(1) is attached to F(0) by a central stalk formed by the gamma and epsilon chains, while a peripheral stalk is formed by the delta, b and b' chains.

The protein localises to the plastid. The protein resides in the chloroplast thylakoid membrane. Its function is as follows. F(1)F(0) ATP synthase produces ATP from ADP in the presence of a proton or sodium gradient. F-type ATPases consist of two structural domains, F(1) containing the extramembraneous catalytic core and F(0) containing the membrane proton channel, linked together by a central stalk and a peripheral stalk. During catalysis, ATP synthesis in the catalytic domain of F(1) is coupled via a rotary mechanism of the central stalk subunits to proton translocation. Component of the F(0) channel, it forms part of the peripheral stalk, linking F(1) to F(0). This Chlamydomonas reinhardtii (Chlamydomonas smithii) protein is ATP synthase subunit b, chloroplastic.